Here is a 182-residue protein sequence, read N- to C-terminus: Fatty-acid and retinol-binding protein 2 (182 aa).

The first 17 residues, 1–17 (MIRAFLVVALASVAVFS), serve as a signal peptide directing secretion. Coiled coils occupy residues 46–73 (LKAI…EEEF) and 131–152 (TLDS…LSDD).

The protein belongs to the fatty-acid and retinol-binding protein (FARBP) family.

It is found in the secreted. Functionally, probably binds lipids. This is Fatty-acid and retinol-binding protein 2 (far-2) from Caenorhabditis elegans.